The chain runs to 133 residues: Large ribosomal subunit protein uL16 (133 aa).

This sequence belongs to the universal ribosomal protein uL16 family. In terms of assembly, part of the 50S ribosomal subunit.

Functionally, binds 23S rRNA and is also seen to make contacts with the A and possibly P site tRNAs. This Blochmanniella floridana protein is Large ribosomal subunit protein uL16.